The following is a 229-amino-acid chain: Large ribosomal subunit protein uL1 (229 aa).

This sequence belongs to the universal ribosomal protein uL1 family. Part of the 50S ribosomal subunit.

Functionally, binds directly to 23S rRNA. The L1 stalk is quite mobile in the ribosome, and is involved in E site tRNA release. In terms of biological role, protein L1 is also a translational repressor protein, it controls the translation of the L11 operon by binding to its mRNA. The sequence is that of Large ribosomal subunit protein uL1 from Streptococcus pneumoniae (strain Taiwan19F-14).